A 114-amino-acid polypeptide reads, in one-letter code: uncharacterized protein (114 aa).

Possibly involved in pGI2 replication mechanism. This is an uncharacterized protein from Bacillus thuringiensis.